The sequence spans 249 residues: Eukaryotic translation initiation factor 3 subunit K (249 aa).

One can recognise a PCI domain in the interval 46–222 (FDCYANLALL…VKVPSNKENE (177 aa)).

The protein belongs to the eIF-3 subunit K family. Component of the eukaryotic translation initiation factor 3 (eIF-3) complex.

The protein localises to the cytoplasm. Its function is as follows. Component of the eukaryotic translation initiation factor 3 (eIF-3) complex, which is involved in protein synthesis of a specialized repertoire of mRNAs and, together with other initiation factors, stimulates binding of mRNA and methionyl-tRNAi to the 40S ribosome. The eIF-3 complex specifically targets and initiates translation of a subset of mRNAs involved in cell proliferation. The protein is Eukaryotic translation initiation factor 3 subunit K of Aspergillus clavatus (strain ATCC 1007 / CBS 513.65 / DSM 816 / NCTC 3887 / NRRL 1 / QM 1276 / 107).